The sequence spans 285 residues: UPF0703 protein YcgQ (285 aa).

The next 4 helical transmembrane spans lie at 4–24, 34–54, 89–109, and 210–230; these read LLVL…GNLT, LSFI…YLFI, LIYV…IATL, and FVLR…GMLV.

The protein belongs to the UPF0703 family.

The protein localises to the cell membrane. This is UPF0703 protein YcgQ (ycgQ) from Bacillus subtilis (strain 168).